Consider the following 315-residue polypeptide: Glutathione synthetase (315 aa).

In terms of domain architecture, ATP-grasp spans 125-310; sequence KLYTAWFADL…ITGMLMDAIE (186 aa). 151–207 contacts ATP; the sequence is WEKHGDIIMKPLDGMGGASIFRVKEGDPNIGVIAETLTELGNRYCMAQNYLPAIKDG. 2 residues coordinate Mg(2+): glutamate 281 and asparagine 283.

This sequence belongs to the prokaryotic GSH synthase family. Requires Mg(2+) as cofactor. It depends on Mn(2+) as a cofactor.

It catalyses the reaction gamma-L-glutamyl-L-cysteine + glycine + ATP = glutathione + ADP + phosphate + H(+). Its pathway is sulfur metabolism; glutathione biosynthesis; glutathione from L-cysteine and L-glutamate: step 2/2. This Salmonella typhi protein is Glutathione synthetase.